We begin with the raw amino-acid sequence, 65 residues long: Large ribosomal subunit protein uL29 (65 aa).

It belongs to the universal ribosomal protein uL29 family.

The chain is Large ribosomal subunit protein uL29 from Bacteroides fragilis (strain ATCC 25285 / DSM 2151 / CCUG 4856 / JCM 11019 / LMG 10263 / NCTC 9343 / Onslow / VPI 2553 / EN-2).